The chain runs to 452 residues: GTPase Obg (452 aa).

The region spanning 1 to 158 (MFIDRAKIYV…KWIVLELKVM (158 aa)) is the Obg domain. 2 disordered regions span residues 66 to 87 (GKRG…DKVI) and 117 to 143 (AEGG…SEDG). An OBG-type G domain is found at 159–338 (AEVGLIGYPN…LLDFVAEKVA (180 aa)). GTP is bound by residues 165 to 172 (GYPNVGKS), 190 to 194 (FTTLN), 212 to 215 (DIPG), 282 to 285 (NKMD), and 319 to 321 (SAA). Residues Ser172 and Thr192 each contribute to the Mg(2+) site. One can recognise an OCT domain in the interval 376–452 (IEEKPKSDFG…KIGNVEFEYQ (77 aa)).

It belongs to the TRAFAC class OBG-HflX-like GTPase superfamily. OBG GTPase family. Monomer. Requires Mg(2+) as cofactor.

It localises to the cytoplasm. Its function is as follows. An essential GTPase which binds GTP, GDP and possibly (p)ppGpp with moderate affinity, with high nucleotide exchange rates and a fairly low GTP hydrolysis rate. Plays a role in control of the cell cycle, stress response, ribosome biogenesis and in those bacteria that undergo differentiation, in morphogenesis control. This chain is GTPase Obg, found in Natranaerobius thermophilus (strain ATCC BAA-1301 / DSM 18059 / JW/NM-WN-LF).